The chain runs to 382 residues: Cytochrome b (382 aa).

The next 4 membrane-spanning stretches (helical) occupy residues 36 to 56 (FGSLLALCLMIQILTGLFLTM), 80 to 101 (WLIRTIHANGASFFFICIYLHI), 116 to 136 (WFIGVIILFMLMATAFMGYVL), and 181 to 201 (FYTFHFLLPFIILMLTMIHLL). Heme b-binding residues include His-86 and His-100. 2 residues coordinate heme b: His-185 and His-199. His-204 is an a ubiquinone binding site. Transmembrane regions (helical) follow at residues 229 to 249 (YKDLIGFLILMMLLLMLTLSN), 291 to 311 (LGGVIALVMSILILIILPLTF), 323 to 343 (INQFMFWIFVMMVILLTWIGA), and 350 to 370 (YIITGQLLTILYFLYFILNPL).

The protein belongs to the cytochrome b family. The main subunits of complex b-c1 are: cytochrome b, cytochrome c1 and the Rieske protein. It depends on heme b as a cofactor.

The protein localises to the mitochondrion inner membrane. Functionally, component of the ubiquinol-cytochrome c reductase complex (complex III or cytochrome b-c1 complex) that is part of the mitochondrial respiratory chain. The b-c1 complex mediates electron transfer from ubiquinol to cytochrome c. Contributes to the generation of a proton gradient across the mitochondrial membrane that is then used for ATP synthesis. This chain is Cytochrome b (MT-CYB), found in Samia ricini (Indian eri silkmoth).